The sequence spans 261 residues: Potassium/proton antiporter CemA (261 aa).

Transmembrane regions (helical) follow at residues 138–158 (IISH…YLIL), 184–204 (FLIL…GWEL), and 221–241 (IISG…KYWI).

This sequence belongs to the CemA family.

The protein localises to the plastid. It is found in the chloroplast inner membrane. It catalyses the reaction K(+)(in) + H(+)(out) = K(+)(out) + H(+)(in). Contributes to K(+)/H(+) antiport activity by supporting proton efflux to control proton extrusion and homeostasis in chloroplasts in a light-dependent manner to modulate photosynthesis. Prevents excessive induction of non-photochemical quenching (NPQ) under continuous-light conditions. Indirectly promotes efficient inorganic carbon uptake into chloroplasts. This Pinus koraiensis (Korean pine) protein is Potassium/proton antiporter CemA.